The chain runs to 758 residues: 5-methyltetrahydropteroyltriglutamate--homocysteine methyltransferase (758 aa).

5-methyltetrahydropteroyltri-L-glutamate is bound by residues Arg17–Lys20 and Lys117. L-homocysteine-binding positions include Ile434–Ser436 and Glu487. L-methionine is bound by residues Ile434–Ser436 and Glu487. 5-methyltetrahydropteroyltri-L-glutamate is bound by residues Arg518–Cys519 and Trp564. Position 602 (Asp602) interacts with L-homocysteine. Asp602 provides a ligand contact to L-methionine. Glu608 contacts 5-methyltetrahydropteroyltri-L-glutamate. Zn(2+) is bound by residues His644, Cys646, and Glu668. Catalysis depends on His697, which acts as the Proton donor. Cys729 contacts Zn(2+).

It belongs to the vitamin-B12 independent methionine synthase family. Zn(2+) is required as a cofactor.

The catalysed reaction is 5-methyltetrahydropteroyltri-L-glutamate + L-homocysteine = tetrahydropteroyltri-L-glutamate + L-methionine. It functions in the pathway amino-acid biosynthesis; L-methionine biosynthesis via de novo pathway; L-methionine from L-homocysteine (MetE route): step 1/1. Its function is as follows. Catalyzes the transfer of a methyl group from 5-methyltetrahydrofolate to homocysteine resulting in methionine formation. This chain is 5-methyltetrahydropteroyltriglutamate--homocysteine methyltransferase, found in Yersinia pseudotuberculosis serotype O:1b (strain IP 31758).